A 496-amino-acid chain; its full sequence is Gamma-aminobutyric acid receptor subunit beta-like (496 aa).

A signal peptide (or 27) is located at residues 1–20; that stretch reads MTCFTRVGVSCGLFFFLLGA. At 21-258 the chain is on the extracellular side; sequence QLQLIRCIRK…SFKLQRNIGY (238 aa). Residues asparagine 39 and asparagine 189 are each glycosylated (N-linked (GlcNAc...) asparagine). Residues cysteine 176 and cysteine 190 are joined by a disulfide bond. The next 3 helical transmembrane spans lie at 259–280, 285–306, and 318–342; these read FVFQ…SFWI, TSAR…STGV, and AIDI…AVNY. At 343–472 the chain is on the cytoplasmic side; it reads TYWGKRAKKK…KIKDVNIIDK (130 aa). Residues 473–494 form a helical membrane-spanning segment; the sequence is YSRMIFPISFLAFNLGYWLFYI.

The protein belongs to the ligand-gated ion channel (TC 1.A.9) family. Gamma-aminobutyric acid receptor (TC 1.A.9.5) subfamily. Generally pentameric. There are five types of GABA(A) receptor chains: alpha, beta, gamma, delta, and rho. Interacts with Grd (alpha chain).

The protein resides in the postsynaptic cell membrane. It localises to the cell membrane. In terms of biological role, GABA, an inhibitory neurotransmitter, mediates neuronal inhibition by binding to the GABA receptor and opening an integral chloride channel. Combines with the ligand-gated ion channel subunit GRD to form cation-selective GABA-gated ion channels when coexpressed in Xenopus laevis oocytes. This Drosophila melanogaster (Fruit fly) protein is Gamma-aminobutyric acid receptor subunit beta-like (Lcch3).